A 1610-amino-acid polypeptide reads, in one-letter code: Adenylate cyclase type 10 (1610 aa).

Guanylate cyclase domains follow at residues 42–179 (VLMF…RLAQ) and 293–418 (TIVF…ARMM). 2 residues coordinate Mg(2+): Asp-47 and Ile-48. 47 to 52 (DISGFT) contributes to the ATP binding site. Position 95 (Lys-95) interacts with hydrogencarbonate. Asp-99 is a Mg(2+) binding site. ATP is bound by residues Asp-99 and Lys-144. Hydrogencarbonate is bound by residues Val-167, Arg-176, and Met-337. ATP-binding positions include Val-406 and 412–416 (NIAAR).

This sequence belongs to the adenylyl cyclase class-4/guanylyl cyclase family. It depends on Mg(2+) as a cofactor. Requires Mn(2+) as cofactor.

The protein localises to the cell membrane. It localises to the cytoplasm. Its subcellular location is the cytoskeleton. It is found in the perinuclear region. The protein resides in the nucleus. The protein localises to the cell projection. It localises to the cilium. It carries out the reaction ATP = 3',5'-cyclic AMP + diphosphate. With respect to regulation, activated by manganese or magnesium ions. In the presence of magnesium ions, the enzyme is activated by bicarbonate. Calcium mildly increases the enzyme activity, also in the presence of magnesium ions. In terms of biological role, catalyzes the formation of the signaling molecule cAMP. May function as sensor that mediates responses to changes in cellular bicarbonate and CO(2) levels. Has a critical role in mammalian spermatogenesis by producing the cAMP which regulates cAMP-responsive nuclear factors indispensable for sperm maturation in the epididymis. Induces capacitation, the maturational process that sperm undergo prior to fertilization. Involved in ciliary beat regulation. This is Adenylate cyclase type 10 (ADCY10) from Oryctolagus cuniculus (Rabbit).